The sequence spans 2215 residues: Unconventional myosin-VIIa (2215 aa).

The Myosin motor domain maps to 65–741 (HGVEDMIRLG…HDMLLEVERD (677 aa)). Residue 158-165 (GESGAGKT) participates in ATP binding. The tract at residues 632–639 (FVRCIKPN) is actin-binding. 5 IQ domains span residues 745–765 (TDRV…SNFL), 768–788 (KNAA…KNYG), 791–811 (RLGF…QQYR), 814–834 (RQRI…KAFR), and 837–857 (LWAV…RLHQ). The SAH stretch occupies residues 858–935 (RLRAEYLWRL…LEQMERARHE (78 aa)). The 237-residue stretch at 1017 to 1253 (YTRRPLKQPL…PSWLELQATK (237 aa)) folds into the MyTH4 1 domain. An FERM 1 domain is found at 1258–1602 (IMLPVTFMDG…LVVTFLEGLR (345 aa)). Ser1569 is subject to Phosphoserine. Position 1571 is a phosphothreonine (Thr1571). The SH3 domain occupies 1603 to 1672 (KRSKYVVALQ…PTDSVYVMPT (70 aa)). One can recognise a MyTH4 2 domain in the interval 1747–1896 (HTREPLKQAL…PHLVEVEAIQ (150 aa)). Residues 1902 to 2205 (IFHKVYFPDD…SYISQMLTAM (304 aa)) form the FERM 2 domain.

This sequence belongs to the TRAFAC class myosin-kinesin ATPase superfamily. Myosin family. As to quaternary structure, might homodimerize in a two headed molecule through the formation of a coiled-coil rod. Identified in a complex with USH1C and USH1G. Interacts with MYRIP. Interacts with RPE65. Interacts with CIB2. May interact with CALM. Interacts with WHRN. Interacts with PLEKHB1 (via PH domain). Interacts with PCDH15. Interacts with TWF2. Interacts with USH1G. Interacts with MYH9. Interacts (via MyTH4-FERM domains) with cytoplasmic regions of ADGRV1 and USH2A. Interacts with PDZD7 (via MyTH4-FERM domains). Interacts with CALML4. In terms of tissue distribution, expressed in the pigment epithelium and the photoreceptor cells of the retina. Also found in kidney, liver, testis, cochlea, lymphocytes. Not expressed in brain.

It localises to the cytoplasm. It is found in the cell cortex. Its subcellular location is the cytoskeleton. The protein localises to the synapse. ATP hydrolysis is inhibited by Mg(2+), already at a concentration of 0.4 mM. Functionally, myosins are actin-based motor molecules with ATPase activity. Unconventional myosins serve in intracellular movements. Their highly divergent tails bind to membranous compartments, which are then moved relative to actin filaments. In the retina, plays an important role in the renewal of the outer photoreceptor disks. Plays an important role in the distribution and migration of retinal pigment epithelial (RPE) melanosomes and phagosomes, and in the regulation of opsin transport in retinal photoreceptors. In the inner ear, plays an important role in differentiation, morphogenesis and organization of cochlear hair cell bundles. Involved in hair-cell vesicle trafficking of aminoglycosides, which are known to induce ototoxicity. Motor protein that is a part of the functional network formed by USH1C, USH1G, CDH23 and MYO7A that mediates mechanotransduction in cochlear hair cells. Required for normal hearing. The protein is Unconventional myosin-VIIa of Homo sapiens (Human).